A 961-amino-acid polypeptide reads, in one-letter code: Glycine dehydrogenase (decarboxylating) (961 aa).

The residue at position 709 (Lys709) is an N6-(pyridoxal phosphate)lysine.

This sequence belongs to the GcvP family. The glycine cleavage system is composed of four proteins: P, T, L and H. Pyridoxal 5'-phosphate is required as a cofactor.

It catalyses the reaction N(6)-[(R)-lipoyl]-L-lysyl-[glycine-cleavage complex H protein] + glycine + H(+) = N(6)-[(R)-S(8)-aminomethyldihydrolipoyl]-L-lysyl-[glycine-cleavage complex H protein] + CO2. In terms of biological role, the glycine cleavage system catalyzes the degradation of glycine. The P protein binds the alpha-amino group of glycine through its pyridoxal phosphate cofactor; CO(2) is released and the remaining methylamine moiety is then transferred to the lipoamide cofactor of the H protein. In Teredinibacter turnerae (strain ATCC 39867 / T7901), this protein is Glycine dehydrogenase (decarboxylating).